A 313-amino-acid chain; its full sequence is Protein FixB (313 aa).

255–283 (LYLAVGISGQIQHMVGANASQTIFAINKD) is an FAD binding site.

This sequence belongs to the ETF alpha-subunit/FixB family. In terms of assembly, heterodimer of FixA and FixB.

Its pathway is amine and polyamine metabolism; carnitine metabolism. Functionally, required for anaerobic carnitine reduction. May bring reductant to CaiA. In Escherichia coli O157:H7, this protein is Protein FixB.